The sequence spans 175 residues: Ribosome maturation factor RimM (175 aa).

Residues 99–171 (AGEYYWFQLK…RILFDLPDGL (73 aa)) enclose the PRC barrel domain.

This sequence belongs to the RimM family. Binds ribosomal protein uS19.

Its subcellular location is the cytoplasm. In terms of biological role, an accessory protein needed during the final step in the assembly of 30S ribosomal subunit, possibly for assembly of the head region. Essential for efficient processing of 16S rRNA. May be needed both before and after RbfA during the maturation of 16S rRNA. It has affinity for free ribosomal 30S subunits but not for 70S ribosomes. The chain is Ribosome maturation factor RimM from Syntrophotalea carbinolica (strain DSM 2380 / NBRC 103641 / GraBd1) (Pelobacter carbinolicus).